We begin with the raw amino-acid sequence, 345 residues long: Diacylglycerol O-acyltransferase 1 (345 aa).

Topologically, residues 1–49 (MSEETSIPGIIASTPPISKDSRRNVSHWLQALAVFLHSVSLTLTASWYT) are cytoplasmic. Residues 50–70 (VLWAFLPFWPFLIVYLIWLIY) form a helical membrane-spanning segment. At 71–113 (DDGFVTGKDRQKRWLRNAPPYRWFCHYFPIRLHKTTELDSEKN) the chain is on the lumenal side. A helical membrane pass occupies residues 114–134 (YIFGYHPHGIISLGAFGGFAS). Topologically, residues 135–141 (EGADFSK) are cytoplasmic. Residues 142 to 162 (LFPGINVSVLTLNSNFYVPVY) traverse the membrane as a helical segment. Topologically, residues 163–216 (RDYLMALNINSVSKKSCVSILSRKPGDSVLIVIGGAQESLLSRPGQNNLVLKKR) are lumenal. A helical membrane pass occupies residues 217-237 (FGFVKLAFLTGSSLVPCFAFG). The Cytoplasmic portion of the chain corresponds to 238-345 (ESDIFEQVDN…NRISELKLSA (108 aa)).

Belongs to the diacylglycerol acyltransferase family.

The protein localises to the lipid droplet. It localises to the endoplasmic reticulum membrane. It carries out the reaction an acyl-CoA + a 1,2-diacyl-sn-glycerol = a triacyl-sn-glycerol + CoA. The enzyme catalyses a 2-acylglycerol + an acyl-CoA = a 1,2-diacyl-sn-glycerol + CoA. It participates in glycerolipid metabolism; triacylglycerol biosynthesis. Functionally, catalyzes the terminal and only committed step in triacylglycerol (TAG) synthesis by using diacylglycerol (DAG) and fatty acyl-CoA as substrates. Required for storage lipid synthesis. Major DAG esterifying enzyme in stationary phase when TAG production is particularly active. Involved in lipid particle synthesis from the endoplasmic reticulum, promoting localized TAG production at discrete ER subdomains. This is Diacylglycerol O-acyltransferase 1 (dga1) from Schizosaccharomyces pombe (strain 972 / ATCC 24843) (Fission yeast).